The primary structure comprises 513 residues: MHPDLPHSQLKIRRVRLDTGRENVVVISRQSKALRAEIFRGFSRVELRLNGKVLLATLLITDDDTLAAQDEIGLSEPAFRRFAEPVGTLVAVTPATPPESLEAVRAKIRGRTLSQAEIGAIINDLAHYRYSDMEIAAFLIGSASFITSDELLALTGAMAQAGTQLVWPDPVVVDKHCIGGIPGNRTSMVVVPIVAAHGLPIPKTSSRAITSPAGTADTMEVLARVNVGVEEMKAIVSSCNGCLIWGGHVNLSPADDVLISVERPLSLDTREQMVASIMSKKIAAGSTHLLIDIPVGPTAKVTGAVEAMRLRKLFEFVGDRFGRTVEVITTDGRQPIGNGIGPVLEANDVMAVLGNDKDAPRDLREKSLRLAAHLLEYDPKLRGGAGYARARELLDSGAALKQMQKIIDAQGPSTCSTELGSLSFDIKAAHDGTVSAIDCLRLNRLARTAGAPLDKGAGIRLFKKIGDHVEQGEPLYRVYAFDQPEHDLAASAAAAGNGYAVDGHDALPSKTAS.

Belongs to the thymidine/pyrimidine-nucleoside phosphorylase family. Type 2 subfamily.

The catalysed reaction is thymidine + phosphate = 2-deoxy-alpha-D-ribose 1-phosphate + thymine. The sequence is that of Putative thymidine phosphorylase from Bradyrhizobium diazoefficiens (strain JCM 10833 / BCRC 13528 / IAM 13628 / NBRC 14792 / USDA 110).